The following is a 553-amino-acid chain: Phosphomethylpyrimidine synthase (553 aa).

Residues Asn-192, Met-221, Tyr-250, His-286, 306–308 (SRG), 347–350 (DGLR), and Glu-386 contribute to the substrate site. His-390 contributes to the Zn(2+) binding site. Residue Tyr-413 participates in substrate binding. His-454 is a Zn(2+) binding site. The [4Fe-4S] cluster site is built by Cys-534, Cys-537, and Cys-542.

The protein belongs to the ThiC family. As to quaternary structure, homodimer. It depends on [4Fe-4S] cluster as a cofactor.

It catalyses the reaction 5-amino-1-(5-phospho-beta-D-ribosyl)imidazole + S-adenosyl-L-methionine = 4-amino-2-methyl-5-(phosphooxymethyl)pyrimidine + CO + 5'-deoxyadenosine + formate + L-methionine + 3 H(+). It functions in the pathway cofactor biosynthesis; thiamine diphosphate biosynthesis. Functionally, catalyzes the synthesis of the hydroxymethylpyrimidine phosphate (HMP-P) moiety of thiamine from aminoimidazole ribotide (AIR) in a radical S-adenosyl-L-methionine (SAM)-dependent reaction. This chain is Phosphomethylpyrimidine synthase, found in Anaplasma marginale (strain St. Maries).